Reading from the N-terminus, the 120-residue chain is Ribosomal protein eL22-like 1 (120 aa).

This sequence belongs to the eukaryotic ribosomal protein eL22 family.

The polypeptide is Ribosomal protein eL22-like 1 (rpl22l1) (Xenopus tropicalis (Western clawed frog)).